A 505-amino-acid chain; its full sequence is Photosystem II CP47 reaction center protein (505 aa).

At 1 to 19 (GLPWYRVHTVLINDPGRLI) the chain is on the cytoplasmic side. Residues His8, His22, His25, His99, and His113 each contribute to the chlorophyll a site. The chain crosses the membrane as a helical span at residues 20–35 (AAHLMHTALVAGWAGS). Over 36–99 (MALYELATFD…WSFEGVALAH (64 aa)) the chain is Lumenal. Residues 100 to 114 (IVLSGLLFLAACWHW) traverse the membrane as a helical segment. Residues 115–138 (VYWDLELFRDPRTGEPALDLPKMF) lie on the Cytoplasmic side of the membrane. A helical membrane pass occupies residues 139-155 (GIHLFLAGLLCFGFGAF). Chlorophyll a is bound by residues His141, His156, His200, His201, and His215. The Lumenal portion of the chain corresponds to 156–201 (HLTGLFGPGMWVSDPYGLTGSVQPVAPEWGPDGFNPYNPGGVVAHH). A helical transmembrane segment spans residues 202–217 (IAAGIVGIIAGLFHIL). At 218 to 235 (VRPPQRLYKALRMGNIET) the chain is on the cytoplasmic side. Residues 236–251 (VLSSSIAAVFFAAFVV) traverse the membrane as a helical segment. The Lumenal portion of the chain corresponds to 252–455 (AGTMWYGSAT…PRGWFTFAHA (204 aa)). His454, His465, and His468 together coordinate chlorophyll a. A helical membrane pass occupies residues 456-471 (VFALLFFFGHIWHGAR). Residues 472 to 505 (TLFRDVFSGIDPELSPEQVEWGFYQKVGDVTTRK) lie on the Cytoplasmic side of the membrane.

Belongs to the PsbB/PsbC family. PsbB subfamily. In terms of assembly, PSII is composed of 1 copy each of membrane proteins PsbA, PsbB, PsbC, PsbD, PsbE, PsbF, PsbH, PsbI, PsbJ, PsbK, PsbL, PsbM, PsbT, PsbX, PsbY, PsbZ, Psb30/Ycf12, peripheral proteins PsbO, CyanoQ (PsbQ), PsbU, PsbV and a large number of cofactors. It forms dimeric complexes. Binds multiple chlorophylls. PSII binds additional chlorophylls, carotenoids and specific lipids. serves as cofactor.

The protein resides in the cellular thylakoid membrane. Functionally, one of the components of the core complex of photosystem II (PSII). It binds chlorophyll and helps catalyze the primary light-induced photochemical processes of PSII. PSII is a light-driven water:plastoquinone oxidoreductase, using light energy to abstract electrons from H(2)O, generating O(2) and a proton gradient subsequently used for ATP formation. The polypeptide is Photosystem II CP47 reaction center protein (Thermostichus vulcanus (Synechococcus vulcanus)).